A 295-amino-acid chain; its full sequence is MRWPPWASDSQAQQQTAKHDEHDERQAAAKSTTTSKKKDWESSVTAIDWAAFTEARTIIPTLILTSGFLGAFYIHRRYLRRFPDAVSITPSYFRRRSLLGQVTSVGDGDNFRIYHTPGGRLAGWGWLPWKKIPTSKKELRDKTVHIRLAGIDAPELAHFGRPEQPFAREAHQWLTSYLLGRRVRAYIHRPDQYQRAVASVYVRRLLDFPPLRRRDVSYEMLKRGLATVYEAKIGAEFGGEAMERKYKKAEWWAKLRGVGLWKDYRRNKTKWESPREYKTRMGLEEAAQPPVETKK.

Residues 1–35 are disordered; sequence MRWPPWASDSQAQQQTAKHDEHDERQAAAKSTTTS. A compositionally biased stretch (basic and acidic residues) spans 17–27; that stretch reads AKHDEHDERQA. The chain crosses the membrane as a helical span at residues 52 to 74; it reads FTEARTIIPTLILTSGFLGAFYI. The TNase-like domain occupies 96–263; sequence RSLLGQVTSV…KLRGVGLWKD (168 aa). Arg-147 is an active-site residue. Asp-152 is a Ca(2+) binding site. Residues Glu-155 and Arg-195 contribute to the active site.

Belongs to the LCL3 family.

It localises to the mitochondrion. It is found in the membrane. This Neosartorya fischeri (strain ATCC 1020 / DSM 3700 / CBS 544.65 / FGSC A1164 / JCM 1740 / NRRL 181 / WB 181) (Aspergillus fischerianus) protein is Probable endonuclease lcl3 (lcl3).